Reading from the N-terminus, the 591-residue chain is L-fucose isomerase (591 aa).

Catalysis depends on proton acceptor residues Glu337 and Asp361. Residues Glu337, Asp361, and His528 each coordinate Mn(2+).

The protein belongs to the L-fucose isomerase family. In terms of assembly, homohexamer. Mn(2+) is required as a cofactor.

The protein localises to the cytoplasm. The enzyme catalyses L-fucose = L-fuculose. Its pathway is carbohydrate degradation; L-fucose degradation; L-lactaldehyde and glycerone phosphate from L-fucose: step 1/3. Converts the aldose L-fucose into the corresponding ketose L-fuculose. This Escherichia coli (strain 55989 / EAEC) protein is L-fucose isomerase.